A 147-amino-acid polypeptide reads, in one-letter code: 3-dehydroquinate dehydratase (147 aa).

Catalysis depends on Y26, which acts as the Proton acceptor. Residues N77, H83, and D90 each contribute to the substrate site. The Proton donor role is filled by H103. Residues L104–S105 and R114 each bind substrate.

This sequence belongs to the type-II 3-dehydroquinase family. As to quaternary structure, homododecamer.

It catalyses the reaction 3-dehydroquinate = 3-dehydroshikimate + H2O. It participates in metabolic intermediate biosynthesis; chorismate biosynthesis; chorismate from D-erythrose 4-phosphate and phosphoenolpyruvate: step 3/7. Functionally, catalyzes a trans-dehydration via an enolate intermediate. In Proteus mirabilis (strain HI4320), this protein is 3-dehydroquinate dehydratase.